A 399-amino-acid polypeptide reads, in one-letter code: Cyclic dehypoxanthine futalosine synthase (399 aa).

The region spanning 56 to 288 (ATYIIERNIN…IAIARVFLDN (233 aa)) is the Radical SAM core domain. Positions 70, 74, and 77 each coordinate [4Fe-4S] cluster.

This sequence belongs to the radical SAM superfamily. MqnC family. The cofactor is [4Fe-4S] cluster.

The catalysed reaction is dehypoxanthine futalosine + S-adenosyl-L-methionine = cyclic dehypoxanthinylfutalosinate + 5'-deoxyadenosine + L-methionine + H(+). It functions in the pathway quinol/quinone metabolism; menaquinone biosynthesis. Its function is as follows. Radical SAM enzyme that catalyzes the cyclization of dehypoxanthine futalosine (DHFL) into cyclic dehypoxanthine futalosine (CDHFL), a step in the biosynthesis of menaquinone (MK, vitamin K2). This chain is Cyclic dehypoxanthine futalosine synthase, found in Streptomyces coelicolor (strain ATCC BAA-471 / A3(2) / M145).